Consider the following 293-residue polypeptide: MAAGKEIRGKIKSVENTKKITKAMEMVAASKMRKAQERMRAARPYADKIRNITANLSRATPEYHHPFVVKNSGSGVVGMIIVTTDKGLCGGMNTNVLRLVTNKMRELDAAGTKVQAVAIGNKGLGFLNRIGAKVVSQATQLGDTPHLDKLIGPVKVLLDLYAEGKLDAVYICYTRFLNTMKQEPQVEQLLPLSDERLSQSAAEQQSHGWDYIYEPDAQAVIDNLMVRYAEALIYQSVAENMASEQSARMVAMKAATDNAGSLIGELKLVYNKTRQAAITKELSEIVSGAAAVG.

It belongs to the ATPase gamma chain family. F-type ATPases have 2 components, CF(1) - the catalytic core - and CF(0) - the membrane proton channel. CF(1) has five subunits: alpha(3), beta(3), gamma(1), delta(1), epsilon(1). CF(0) has three main subunits: a, b and c.

The protein localises to the cell inner membrane. Functionally, produces ATP from ADP in the presence of a proton gradient across the membrane. The gamma chain is believed to be important in regulating ATPase activity and the flow of protons through the CF(0) complex. The protein is ATP synthase gamma chain of Leptothrix cholodnii (strain ATCC 51168 / LMG 8142 / SP-6) (Leptothrix discophora (strain SP-6)).